Consider the following 234-residue polypeptide: Orotidine 5'-phosphate decarboxylase (234 aa).

Substrate is bound by residues D11, K33, 60 to 69 (DLKFHDIPNT), T120, R181, Q190, G210, and R211. The Proton donor role is filled by K62.

It belongs to the OMP decarboxylase family. Type 1 subfamily. In terms of assembly, homodimer.

It catalyses the reaction orotidine 5'-phosphate + H(+) = UMP + CO2. It participates in pyrimidine metabolism; UMP biosynthesis via de novo pathway; UMP from orotate: step 2/2. In terms of biological role, catalyzes the decarboxylation of orotidine 5'-monophosphate (OMP) to uridine 5'-monophosphate (UMP). The chain is Orotidine 5'-phosphate decarboxylase from Aliivibrio salmonicida (strain LFI1238) (Vibrio salmonicida (strain LFI1238)).